The primary structure comprises 134 residues: MIFGVGVDIVEIRRIKEAIEKHNTFIDRIFSKNEIEYLKNRNLRPEFVAGRFAAKEAVVKSLGSGFRGFDFKDIEIDRTASGRPTVVLKGKAKLMANKYGNYKIHLSISHGVDNAIAYAIMEVDKIEDSDCKDI.

2 residues coordinate Mg(2+): Asp8 and Glu56.

The protein belongs to the P-Pant transferase superfamily. AcpS family. Requires Mg(2+) as cofactor.

It is found in the cytoplasm. The enzyme catalyses apo-[ACP] + CoA = holo-[ACP] + adenosine 3',5'-bisphosphate + H(+). Functionally, transfers the 4'-phosphopantetheine moiety from coenzyme A to a Ser of acyl-carrier-protein. The protein is Holo-[acyl-carrier-protein] synthase of Clostridium kluyveri (strain ATCC 8527 / DSM 555 / NBRC 12016 / NCIMB 10680 / K1).